We begin with the raw amino-acid sequence, 228 residues long: Urease accessory protein UreF (228 aa).

This sequence belongs to the UreF family. UreD, UreF and UreG form a complex that acts as a GTP-hydrolysis-dependent molecular chaperone, activating the urease apoprotein by helping to assemble the nickel containing metallocenter of UreC. The UreE protein probably delivers the nickel.

The protein resides in the cytoplasm. Required for maturation of urease via the functional incorporation of the urease nickel metallocenter. The polypeptide is Urease accessory protein UreF (Alkalilimnicola ehrlichii (strain ATCC BAA-1101 / DSM 17681 / MLHE-1)).